Here is a 103-residue protein sequence, read N- to C-terminus: MSGRGKGGKGLGKGGAKRHRKILRDNIQGITKPAIRRLARRGGVKRISGLIYEETRGVLKIFLENVIRDSVTYTEHAKRKTVTALDVVYALKRSGRTLYGFGA.

Gly residues predominate over residues 1–14 (MSGRGKGGKGLGKG). Residues 1–20 (MSGRGKGGKGLGKGGAKRHR) are disordered. Residue Lys6 is modified to N6-acetyl-N6-methyllysine; alternate. Residues Lys6, Lys9, and Lys13 each carry the N6-methyllysine; alternate modification. Lys13 carries the N6-acetyl-N6-methyllysine; alternate modification. A DNA-binding region spans residues 17 to 21 (KRHRK). N6-glutaryllysine is present on Lys92.

It belongs to the histone H4 family. As to quaternary structure, the nucleosome is a histone octamer containing two molecules each of H2A, H2B, H3 and H4 assembled in one H3-H4 heterotetramer and two H2A-H2B heterodimers. The octamer wraps approximately 147 bp of DNA. Post-translationally, glutarylation at Lys-92 (H4K91glu) destabilizes nucleosomes by promoting dissociation of the H2A-H2B dimers from nucleosomes.

The protein localises to the nucleus. It localises to the chromosome. In terms of biological role, core component of nucleosome. Nucleosomes wrap and compact DNA into chromatin, limiting DNA accessibility to the cellular machineries which require DNA as a template. Histones thereby play a central role in transcription regulation, DNA repair, DNA replication and chromosomal stability. DNA accessibility is regulated via a complex set of post-translational modifications of histones, also called histone code, and nucleosome remodeling. This chain is Histone H4 (H4.1), found in Phanerodontia chrysosporium (White-rot fungus).